The sequence spans 395 residues: Peptide-N(4)-(N-acetyl-beta-glucosaminyl)asparagine amidase (395 aa).

4 residues coordinate Zn(2+): C131, C134, C172, and C175. Catalysis depends on C198, which acts as the Nucleophile. Active-site residues include H232 and D249. E252 is a binding site for substrate. The interval 363–395 is disordered; sequence PELTKTTPSTDLPSGRQSGSTEWTKSRGENGES. The segment covering 366–385 has biased composition (polar residues); sequence TKTTPSTDLPSGRQSGSTEW. Positions 386–395 are enriched in basic and acidic residues; sequence TKSRGENGES.

This sequence belongs to the transglutaminase-like superfamily. PNGase family. Requires Zn(2+) as cofactor.

The protein resides in the cytoplasm. It catalyses the reaction Hydrolysis of an N(4)-(acetyl-beta-D-glucosaminyl)asparagine residue in which the glucosamine residue may be further glycosylated, to yield a (substituted) N-acetyl-beta-D-glucosaminylamine and a peptide containing an aspartate residue.. In terms of biological role, specifically deglycosylates the denatured form of N-linked glycoproteins in the cytoplasm and assists their proteasome-mediated degradation. Cleaves the beta-aspartyl-glucosamine (GlcNAc) of the glycan and the amide side chain of Asn, converting Asn to Asp. Prefers proteins containing high-mannose over those bearing complex type oligosaccharides. Can recognize misfolded proteins in the endoplasmic reticulum that are exported to the cytosol to be destroyed and deglycosylate them, while it has no activity toward native proteins. Deglycosylation is a prerequisite for subsequent proteasome-mediated degradation of some, but not all, misfolded glycoproteins. The protein is Peptide-N(4)-(N-acetyl-beta-glucosaminyl)asparagine amidase (PNG1) of Candida albicans (strain SC5314 / ATCC MYA-2876) (Yeast).